A 275-amino-acid polypeptide reads, in one-letter code: 4-hydroxy-tetrahydrodipicolinate reductase (275 aa).

Residue 12 to 17 (GAAGRM) coordinates NAD(+). Residue Arg-39 coordinates NADP(+). NAD(+) contacts are provided by residues 102–104 (GTT) and 126–129 (SGNM). Residue His-160 is the Proton donor/acceptor of the active site. Residue His-161 participates in (S)-2,3,4,5-tetrahydrodipicolinate binding. The Proton donor role is filled by Lys-164. Residue 170-171 (GT) participates in (S)-2,3,4,5-tetrahydrodipicolinate binding.

The protein belongs to the DapB family.

It localises to the cytoplasm. The enzyme catalyses (S)-2,3,4,5-tetrahydrodipicolinate + NAD(+) + H2O = (2S,4S)-4-hydroxy-2,3,4,5-tetrahydrodipicolinate + NADH + H(+). The catalysed reaction is (S)-2,3,4,5-tetrahydrodipicolinate + NADP(+) + H2O = (2S,4S)-4-hydroxy-2,3,4,5-tetrahydrodipicolinate + NADPH + H(+). It functions in the pathway amino-acid biosynthesis; L-lysine biosynthesis via DAP pathway; (S)-tetrahydrodipicolinate from L-aspartate: step 4/4. Catalyzes the conversion of 4-hydroxy-tetrahydrodipicolinate (HTPA) to tetrahydrodipicolinate. The polypeptide is 4-hydroxy-tetrahydrodipicolinate reductase (Agrobacterium fabrum (strain C58 / ATCC 33970) (Agrobacterium tumefaciens (strain C58))).